The following is a 352-amino-acid chain: S-adenosylmethionine:tRNA ribosyltransferase-isomerase (352 aa).

This sequence belongs to the QueA family. Monomer.

The protein localises to the cytoplasm. It carries out the reaction 7-aminomethyl-7-carbaguanosine(34) in tRNA + S-adenosyl-L-methionine = epoxyqueuosine(34) in tRNA + adenine + L-methionine + 2 H(+). Its pathway is tRNA modification; tRNA-queuosine biosynthesis. Its function is as follows. Transfers and isomerizes the ribose moiety from AdoMet to the 7-aminomethyl group of 7-deazaguanine (preQ1-tRNA) to give epoxyqueuosine (oQ-tRNA). The chain is S-adenosylmethionine:tRNA ribosyltransferase-isomerase from Gloeobacter violaceus (strain ATCC 29082 / PCC 7421).